A 387-amino-acid polypeptide reads, in one-letter code: Exodeoxyribonuclease 7 large subunit (387 aa).

This sequence belongs to the XseA family. Heterooligomer composed of large and small subunits.

Its subcellular location is the cytoplasm. The catalysed reaction is Exonucleolytic cleavage in either 5'- to 3'- or 3'- to 5'-direction to yield nucleoside 5'-phosphates.. Its function is as follows. Bidirectionally degrades single-stranded DNA into large acid-insoluble oligonucleotides, which are then degraded further into small acid-soluble oligonucleotides. In Campylobacter jejuni subsp. jejuni serotype O:2 (strain ATCC 700819 / NCTC 11168), this protein is Exodeoxyribonuclease 7 large subunit.